The following is a 262-amino-acid chain: 4-hydroxy-2-oxo-heptane-1,7-dioate aldolase (262 aa).

Catalysis depends on His-45, which acts as the Proton acceptor. Residue Gln-147 participates in substrate binding. Glu-149 is a binding site for a divalent metal cation. Residues Ala-174 and Asp-175 each contribute to the substrate site. Asp-175 is a binding site for a divalent metal cation.

This sequence belongs to the HpcH/HpaI aldolase family. Homohexamer; trimer of dimers. The cofactor is a divalent metal cation.

It carries out the reaction 4-hydroxy-2-oxoheptanedioate = succinate semialdehyde + pyruvate. It participates in aromatic compound metabolism; 4-hydroxyphenylacetate degradation; pyruvate and succinate semialdehyde from 4-hydroxyphenylacetate: step 7/7. Catalyzes the reversible retro-aldol cleavage of 4-hydroxy-2-ketoheptane-1,7-dioate (HKHD) to pyruvate and succinic semialdehyde. The protein is 4-hydroxy-2-oxo-heptane-1,7-dioate aldolase of Shigella sonnei (strain Ss046).